A 506-amino-acid polypeptide reads, in one-letter code: Histidine ammonia-lyase (506 aa).

Positions 143 to 145 (ASG) form a cross-link, 5-imidazolinone (Ala-Gly). Ser-144 carries the post-translational modification 2,3-didehydroalanine (Ser).

It belongs to the PAL/histidase family. Post-translationally, contains an active site 4-methylidene-imidazol-5-one (MIO), which is formed autocatalytically by cyclization and dehydration of residues Ala-Ser-Gly.

It localises to the cytoplasm. The enzyme catalyses L-histidine = trans-urocanate + NH4(+). It participates in amino-acid degradation; L-histidine degradation into L-glutamate; N-formimidoyl-L-glutamate from L-histidine: step 1/3. This chain is Histidine ammonia-lyase, found in Salmonella schwarzengrund (strain CVM19633).